Consider the following 231-residue polypeptide: 7-cyano-7-deazaguanine synthase (231 aa).

8 to 18 (FSGGQDSTTCL) is an ATP binding site. Residues C188, C197, C200, and C203 each coordinate Zn(2+).

This sequence belongs to the QueC family. Requires Zn(2+) as cofactor.

It carries out the reaction 7-carboxy-7-deazaguanine + NH4(+) + ATP = 7-cyano-7-deazaguanine + ADP + phosphate + H2O + H(+). It participates in purine metabolism; 7-cyano-7-deazaguanine biosynthesis. In terms of biological role, catalyzes the ATP-dependent conversion of 7-carboxy-7-deazaguanine (CDG) to 7-cyano-7-deazaguanine (preQ(0)). The sequence is that of 7-cyano-7-deazaguanine synthase from Escherichia coli O157:H7.